A 250-amino-acid chain; its full sequence is tRNA pseudouridine synthase A (250 aa).

Catalysis depends on aspartate 52, which acts as the Nucleophile. Tyrosine 111 provides a ligand contact to substrate.

This sequence belongs to the tRNA pseudouridine synthase TruA family. As to quaternary structure, homodimer.

It carries out the reaction uridine(38/39/40) in tRNA = pseudouridine(38/39/40) in tRNA. Functionally, formation of pseudouridine at positions 38, 39 and 40 in the anticodon stem and loop of transfer RNAs. This Methylorubrum extorquens (strain CM4 / NCIMB 13688) (Methylobacterium extorquens) protein is tRNA pseudouridine synthase A.